Here is a 264-residue protein sequence, read N- to C-terminus: Methylthioribulose-1-phosphate dehydratase (264 aa).

Residue C110 participates in substrate binding. Positions 128 and 130 each coordinate Zn(2+). E151 acts as the Proton donor/acceptor in catalysis. H213 contributes to the Zn(2+) binding site.

Belongs to the aldolase class II family. MtnB subfamily. The cofactor is Zn(2+).

It localises to the cytoplasm. It catalyses the reaction 5-(methylsulfanyl)-D-ribulose 1-phosphate = 5-methylsulfanyl-2,3-dioxopentyl phosphate + H2O. It functions in the pathway amino-acid biosynthesis; L-methionine biosynthesis via salvage pathway; L-methionine from S-methyl-5-thio-alpha-D-ribose 1-phosphate: step 2/6. Functionally, catalyzes the dehydration of methylthioribulose-1-phosphate (MTRu-1-P) into 2,3-diketo-5-methylthiopentyl-1-phosphate (DK-MTP-1-P). The protein is Methylthioribulose-1-phosphate dehydratase of Vanderwaltozyma polyspora (strain ATCC 22028 / DSM 70294 / BCRC 21397 / CBS 2163 / NBRC 10782 / NRRL Y-8283 / UCD 57-17) (Kluyveromyces polysporus).